An 876-amino-acid chain; its full sequence is Leucine--tRNA ligase (876 aa).

The short motif at 43-53 is the 'HIGH' region element; that stretch reads PYPSGRIHMGH. The short motif at 632-636 is the 'KMSKS' region element; it reads KMSKS. Residue lysine 635 coordinates ATP.

The protein belongs to the class-I aminoacyl-tRNA synthetase family.

Its subcellular location is the cytoplasm. It carries out the reaction tRNA(Leu) + L-leucine + ATP = L-leucyl-tRNA(Leu) + AMP + diphosphate. This chain is Leucine--tRNA ligase, found in Sinorhizobium fredii (strain NBRC 101917 / NGR234).